The primary structure comprises 955 residues: Thrombospondin-4 (955 aa).

The signal sequence occupies residues 1–24 (MPRRKGLCLFLQMLLLHLYGVCQA). Residues 25 to 192 (QPNYQVFDLL…MDELKLVMGG (168 aa)) enclose the Laminin G-like domain. Positions 281–320 (PKPRCDATSCFRGVRCIDTEGGFQCGPCPEGYTGNGVICT) constitute an EGF-like 1 domain. 21 cysteine pairs are disulfide-bonded: cysteine 285–cysteine 296, cysteine 290–cysteine 305, cysteine 308–cysteine 319, cysteine 325–cysteine 336, cysteine 330–cysteine 345, cysteine 348–cysteine 372, cysteine 378–cysteine 392, cysteine 386–cysteine 401, cysteine 404–cysteine 416, cysteine 422–cysteine 435, cysteine 429–cysteine 445, cysteine 447–cysteine 458, cysteine 474–cysteine 479, cysteine 484–cysteine 504, cysteine 520–cysteine 540, cysteine 543–cysteine 563, cysteine 579–cysteine 599, cysteine 602–cysteine 622, cysteine 640–cysteine 660, cysteine 680–cysteine 700, and cysteine 716–cysteine 937. The region spanning 321 to 358 (DVDECRLNPCFLGVRCINTSPGFKCESCPPGYTGSTIQ) is the EGF-like 2; calcium-binding domain. Positions 374 to 415 (DTNECENGRNGGCTSNSLCINTMGSFRCGGCKPGYVGDQIKG) constitute an EGF-like 3; calcium-binding domain. Residues 418-459 (PEKSCRHGQNPCHASAQCSEEKDGDVTCTCSVGWAGNGYLCG) form the EGF-like 4 domain. 8 TSP type-3 repeats span residues 460-492 (KDTD…NSGQ), 493-528 (EDTD…NIDQ), 529-551 (KNSD…NNDQ), 552-587 (RDTD…NVDQ), 588-610 (KDKD…NPNQ), 611-648 (SDID…NSNQ), 649-688 (LDTD…NPGQ), and 689-724 (EDDN…EITL). Asparagine 609 carries an N-linked (GlcNAc...) asparagine glycan. The segment at 610-678 (QSDIDNDLVG…IPDTVPPGPD (69 aa)) is disordered. Residues 637-649 (TDNCPTVINSNQL) show a composition bias toward polar residues. The span at 657–668 (GDECDDDDDNDG) shows a compositional bias: acidic residues. In terms of domain architecture, TSP C-terminal spans 728–942 (RAYQTVVLDP…LKYRCNDTIP (215 aa)). An N-linked (GlcNAc...) asparagine glycan is attached at asparagine 938.

The protein belongs to the thrombospondin family. As to quaternary structure, homotrimer; disulfide-linked.

The protein resides in the endoplasmic reticulum. The protein localises to the sarcoplasmic reticulum. Its subcellular location is the secreted. It localises to the extracellular space. It is found in the extracellular matrix. Its function is as follows. Adhesive glycoprotein that mediates cell-to-cell and cell-to-matrix interactions and may be involved in various processes including cellular proliferation, migration, adhesion and attachment. May play a role in ER stress response. May participate in the genesis and function of cardiac and skeletal muscle. The sequence is that of Thrombospondin-4 (thbs4) from Xenopus laevis (African clawed frog).